Here is a 156-residue protein sequence, read N- to C-terminus: Large ribosomal subunit protein uL15 (156 aa).

Residues 1–16 (MVRRFKRAVKYRRGSR) are compositionally biased toward basic residues. The tract at residues 1 to 35 (MVRRFKRAVKYRRGSRTHGWGRVGQHRKSGGSGGK) is disordered.

This sequence belongs to the universal ribosomal protein uL15 family. Part of the 50S ribosomal subunit.

Binds to the 23S rRNA. The chain is Large ribosomal subunit protein uL15 from Pyrobaculum neutrophilum (strain DSM 2338 / JCM 9278 / NBRC 100436 / V24Sta) (Thermoproteus neutrophilus).